We begin with the raw amino-acid sequence, 628 residues long: Chaperone protein HtpG (628 aa).

Positions 1–340 (MKGQETRGFQ…SNDLPLNVSR (340 aa)) are a; substrate-binding. Residues 341–556 (EILQDSRVTQ…ADDMTTQMAK (216 aa)) are b. Positions 557-628 (LFAAAGQAAP…IRRMNQLLNA (72 aa)) are c.

The protein belongs to the heat shock protein 90 family. In terms of assembly, homodimer.

Its subcellular location is the cytoplasm. Molecular chaperone. Has ATPase activity. The sequence is that of Chaperone protein HtpG from Sodalis glossinidius (strain morsitans).